Here is an 865-residue protein sequence, read N- to C-terminus: SWI/SNF chromatin-remodeling complex subunit sol1 (865 aa).

4 disordered regions span residues 1-34, 54-92, 116-143, and 163-183; these read MNNQGFVPASDYPTAVSYPTQGQSYNTQEEQPAY, MMNTSENEPNNLAHSQPFRQSPSTQRNLPNQSFDFASNG, QEKEAAMQQQQQQQQQQQLYQRQMQSRE, and VRQTPQPAPSPNTPSGNANQL. Residues 17-30 show a composition bias toward polar residues; that stretch reads SYPTQGQSYNTQEE. The span at 121-139 shows a compositional bias: low complexity; that stretch reads AMQQQQQQQQQQQLYQRQM. Residues 188-278 form the ARID domain; sequence AASFDKFMVS…YLLPYEEAWL (91 aa). The disordered stretch occupies residues 288–380; that stretch reads QQAKANHSAN…QTSSSAAPVD (93 aa). Over residues 328–353 the composition is skewed to polar residues; sequence HSKSPSPAFTANRFSPAAPTTVSSER. Residues 356-368 are compositionally biased toward pro residues; that stretch reads PPYPSAPTRPTPP. Phosphoserine occurs at positions 852 and 855.

This sequence belongs to the SWI1 family. In terms of assembly, component of the SWI/SNF global transcription activator complex composed of at least arp9, arp42, snf5, snf22, snf30, sbf59, sol1, ssr1, ssr2, ssr3, ssr4 and tfg3.

The protein resides in the nucleus. Its function is as follows. Component of the SWI/SNF complex, an ATP-dependent chromatin remodeling complex, required for the positive and negative regulation of gene expression of a large number of genes. It changes chromatin structure by altering DNA-histone contacts within a nucleosome, leading eventually to a change in nucleosome position, thus facilitating or repressing binding of gene-specific transcription factors. In Schizosaccharomyces pombe (strain 972 / ATCC 24843) (Fission yeast), this protein is SWI/SNF chromatin-remodeling complex subunit sol1 (sol1).